The primary structure comprises 509 residues: Protein disulfide-isomerase (509 aa).

An N-terminal signal peptide occupies residues 1–19; the sequence is MLSRALLCLALAWAARVGA. A Thioredoxin 1 domain is found at 20–136; it reads DALEEEDNVL…IVNWLKKRTG (117 aa). Active-site nucleophile residues include Cys55 and Cys58. A disulfide bond links Cys55 and Cys58. Residue Lys202 is modified to N6-acetyllysine. 2 positions are modified to N6-succinyllysine: Lys224 and Lys273. Ser333 and Ser359 each carry phosphoserine. One can recognise a Thioredoxin 2 domain in the interval 335 to 477; it reads ELTAEKITQF…FKKFLESGGQ (143 aa). Active-site nucleophile residues include Cys399 and Cys402. Cys399 and Cys402 are joined by a disulfide. Ser429 carries the post-translational modification Phosphoserine. A Prevents secretion from ER motif is present at residues 506–509; the sequence is KDEL.

This sequence belongs to the protein disulfide isomerase family. In terms of assembly, heterodimer; heterodimerizes with the protein microsomal triglyceride transfer MTTP. Homodimer. Monomers and homotetramers may also occur. Interacts with P4HA2, forming a heterotetramer consisting of 2 alpha subunits (P4HA2) and 2 beta (P4HB), where P4HB plays the role of a structural subunit; this tetramer catalyzes the formation of 4-hydroxyproline in collagen. Also constitutes the structural subunit of the microsomal triacylglycerol transfer protein MTTP in mammalian cells. Stabilizes both enzymes and retain them in the ER without contributing to the catalytic activity. Binds UBQLN1. Interacts with ERO1B. Interacts with ILDR2. Interacts with ERN1/IRE1A (via N-terminus); the interaction is enhanced by phosphorylation of P4HB by FAM20C in response to endoplasmic reticulum stress and results in attenuation of ERN1 activity. Phosphorylation of Ser-359 by FAM20C is induced by endoplasmic reticulum stress and results in a functional switch from oxidoreductase to molecular chaperone. It also promotes interaction with ERN1.

The protein localises to the endoplasmic reticulum. Its subcellular location is the endoplasmic reticulum lumen. It localises to the melanosome. The protein resides in the cell membrane. The catalysed reaction is Catalyzes the rearrangement of -S-S- bonds in proteins.. Its function is as follows. This multifunctional protein catalyzes the formation, breakage and rearrangement of disulfide bonds. At the cell surface, seems to act as a reductase that cleaves disulfide bonds of proteins attached to the cell. May therefore cause structural modifications of exofacial proteins. Inside the cell, seems to form/rearrange disulfide bonds of nascent proteins. At high concentrations and following phosphorylation by FAM20C, functions as a chaperone that inhibits aggregation of misfolded proteins. At low concentrations, facilitates aggregation (anti-chaperone activity). May be involved with other chaperones in the structural modification of the TG precursor in hormone biogenesis. Also acts as a structural subunit of various enzymes such as prolyl 4-hydroxylase and microsomal triacylglycerol transfer protein MTTP. Receptor for LGALS9; the interaction retains P4HB at the cell surface of Th2 T helper cells, increasing disulfide reductase activity at the plasma membrane, altering the plasma membrane redox state and enhancing cell migration. The sequence is that of Protein disulfide-isomerase (P4hb) from Rattus norvegicus (Rat).